The primary structure comprises 115 residues: Somatostatin-1 (115 aa).

Positions 1–24 (MLSCRFQCALVLLSLAVVFSKVSA) are cleaved as a signal peptide. Positions 25 to 88 (APSDLRLRQL…QDEVRLELDR (64 aa)) are excised as a propeptide. Positions 65 to 95 (NDALDSSDLSRGADQDEVRLELDRSANSSPL) are disordered. Over residues 75 to 88 (RGADQDEVRLELDR) the composition is skewed to basic and acidic residues. The cysteines at positions 104 and 115 are disulfide-linked.

Belongs to the somatostatin family.

It localises to the secreted. Its function is as follows. Somatostatin inhibits the release of somatotropin. The sequence is that of Somatostatin-1 (sst1) from Protopterus annectens (African lungfish).